The following is a 118-amino-acid chain: Cobalt transport protein CbiN (118 aa).

The next 2 helical transmembrane spans lie at 7–27 and 70–90; these read INALLLLAVAALAVLPLVLGL and SALFALQAALGAGVLAYYFGL. Residues 99 to 118 are disordered; sequence ERASAASGAAAAPGDAPEGD. The span at 102-118 shows a compositional bias: low complexity; that stretch reads SAASGAAAAPGDAPEGD.

The protein belongs to the CbiN family. Forms an energy-coupling factor (ECF) transporter complex composed of an ATP-binding protein (A component, CbiO), a transmembrane protein (T component, CbiQ) and 2 possible substrate-capture proteins (S components, CbiM and CbiN) of unknown stoichimetry.

The protein resides in the cell membrane. It participates in cofactor biosynthesis; adenosylcobalamin biosynthesis. Part of the energy-coupling factor (ECF) transporter complex CbiMNOQ involved in cobalt import. The protein is Cobalt transport protein CbiN of Streptomyces coelicolor (strain ATCC BAA-471 / A3(2) / M145).